The chain runs to 104 residues: Integration host factor subunit beta (104 aa).

It belongs to the bacterial histone-like protein family. Heterodimer of an alpha and a beta chain.

This protein is one of the two subunits of integration host factor, a specific DNA-binding protein that functions in genetic recombination as well as in transcriptional and translational control. The chain is Integration host factor subunit beta from Chromobacterium violaceum (strain ATCC 12472 / DSM 30191 / JCM 1249 / CCUG 213 / NBRC 12614 / NCIMB 9131 / NCTC 9757 / MK).